A 246-amino-acid chain; its full sequence is Envelope glycoprotein gp95 (246 aa).

At 1–192 the chain is on the extracellular side; that stretch reads IPSRPVGGPC…EWAVHLLKGL (192 aa). Asparagine 31 carries N-linked (GlcNAc...) asparagine; by host glycosylation. Cysteines 50 and 86 form a disulfide. A fusion peptide region spans residues 58-78; it reads GPTARIFASILAPGVAAAQAL. Positions 75–125 form a coiled coil; sequence AQALREIERLACWSVKQANLTTSLLGDLLDDVTSIRHAVLQNRAAIDFLLL. N-linked (GlcNAc...) asparagine; by host glycosylation is present at asparagine 93. Residues 114–130 are immunosuppression; it reads LQNRAAIDFLLLAHGHG. The cysteines at positions 131 and 138 are disulfide-linked. Asparagine 141 carries N-linked (GlcNAc...) asparagine; by host glycosylation. Residues 143-173 adopt a coiled-coil conformation; that stretch reads SDQSESIQKKFQLMKEHVNKIGVDSDLIGSW. A helical membrane pass occupies residues 193-213; sequence LLGLVVILLLVVCLPCLLQML. Residues cysteine 205 and cysteine 208 are each lipidated (S-palmitoyl cysteine; by host). Residues 214-246 are Cytoplasmic-facing; it reads CGNRRKMINNSISYHTEYKKLQKACGQPESRIV.

It belongs to the Alpharetroviruses envelope glycoprotein family. As to quaternary structure, heterodimer with the transmembrane protein. The mature envelope protein (Env) consists of a trimer of SU-TM heterodimers attached by a labile interchain disulfide bond. Interacts with the host cell entry receptor TVA isoforms pg900 and pg800; this interaction allows the viral attachment. In terms of assembly, heterodimer with the surface protein. The mature envelope protein (Env) consists of a trimer of SU-TM heterodimers attached by a labile interchain disulfide bond. Specific enzymatic cleavages in vivo yield mature proteins. Envelope glycoproteins are synthesized as an inactive precursor that is N-glycosylated and processed likely by host cell furin or by a furin-like protease in the Golgi to yield the mature SU and TM proteins. The cleavage site between SU and TM requires the minimal sequence [KR]-X-[KR]-R. Post-translationally, the transmembrane protein is palmitoylated. Palmitoylation is necessary for glycoprotein function and infectivity.

It localises to the virion membrane. The protein resides in the host cell membrane. Its function is as follows. The surface protein (SU) attaches the virus to the host cell entry receptor TVA. This interaction triggers the refolding of the transmembrane protein (TM) thereby unmasking its fusion peptide and the formation of a reactive thiolate to activate its fusogenic potential. Fusion occurs at the host cell plasma membrane. The transmembrane protein (TM) acts as a class I viral fusion protein. Under the current model, the protein has at least 3 conformational states: pre-fusion native state, pre-hairpin intermediate state, and post-fusion hairpin state. During viral and target cell membrane fusion, the coiled coil regions (heptad repeats) assume a trimer-of-hairpins structure, positioning the fusion peptide in close proximity to the C-terminal region of the ectodomain. The formation of this structure appears to drive apposition and subsequent fusion of viral and target cell membranes. Membranes fusion leads to delivery of the nucleocapsid into the cytoplasm. This Rous sarcoma virus subgroup A (strain Schmidt-Ruppin) (RSV-SR-A) protein is Envelope glycoprotein gp95 (env).